The chain runs to 258 residues: L-aspartate dehydrogenase 1 (258 aa).

Residues alanine 121 and asparagine 181 each coordinate NAD(+). Residue histidine 211 is part of the active site.

Belongs to the L-aspartate dehydrogenase family.

It carries out the reaction L-aspartate + NADP(+) + H2O = oxaloacetate + NH4(+) + NADPH + H(+). The enzyme catalyses L-aspartate + NAD(+) + H2O = oxaloacetate + NH4(+) + NADH + H(+). It participates in cofactor biosynthesis; NAD(+) biosynthesis; iminoaspartate from L-aspartate (dehydrogenase route): step 1/1. Functionally, specifically catalyzes the NAD or NADP-dependent dehydrogenation of L-aspartate to iminoaspartate. The sequence is that of L-aspartate dehydrogenase 1 from Bordetella pertussis (strain Tohama I / ATCC BAA-589 / NCTC 13251).